Consider the following 259-residue polypeptide: Proteasome assembly chaperone 2 (259 aa).

This sequence belongs to the PSMG2 family. Forms a heterodimer with psmg1. Degraded by the proteasome upon completion of 20S proteasome maturation.

Its subcellular location is the nucleus. Functionally, chaperone protein which promotes assembly of the 20S proteasome as part of a heterodimer with psmg1. This is Proteasome assembly chaperone 2 from Xenopus laevis (African clawed frog).